A 42-amino-acid chain; its full sequence is uncharacterized protein (42 aa).

This is an uncharacterized protein from Pasteurella multocida (strain Pm70).